The sequence spans 452 residues: 51.5 kDa protein (452 aa).

One can recognise a Helicase ATP-binding domain in the interval 1–126 (MIQSPPGSGK…KDTYDYMIEG (126 aa)). One can recognise a Helicase C-terminal domain in the interval 177 to 333 (DVVQEYVKHA…NIVQAKQCPD (157 aa)). A zinc finger lies at 331–348 (CPDCSAMWPLSQKMCNLC).

In terms of biological role, may play a role in either regulating bacteriophages replication or specifying expression of its own genes. This is 51.5 kDa protein from Lactococcus (lactic streptococci).